Here is a 342-residue protein sequence, read N- to C-terminus: MTDLTLALDVMGGDYGPRVTVPATLQALHLYPSLHVVLVGNQPEIEHFLPKAESSIRQRIEILHTTEVVSMSDRPVHALRNRKQSSMRLAIELVRDGKAQACLSAGNTGALMAIAKVLLKTLPGIDRPALVSCLPAVNQKPVYLLDLGANVSCCSETLFQFAVMGSVLSEAVDKNEQPKVALLNVGIEEIKGNDQVQQAGQLLQQSPQINYVGFIEGNDLYSGNVDVIVCDGFVGNITLKTSEGIAKLLVNQLEKGLTKGFFVRLMAKLIAPRINSVLKQMNPDHYNGASLIGLRGIVVKSHGSADESAYLQAITLAVTEAQRRLPKMIEERLESILLDINN.

The protein belongs to the PlsX family. In terms of assembly, homodimer. Probably interacts with PlsY.

It localises to the cytoplasm. It carries out the reaction a fatty acyl-[ACP] + phosphate = an acyl phosphate + holo-[ACP]. Its pathway is lipid metabolism; phospholipid metabolism. In terms of biological role, catalyzes the reversible formation of acyl-phosphate (acyl-PO(4)) from acyl-[acyl-carrier-protein] (acyl-ACP). This enzyme utilizes acyl-ACP as fatty acyl donor, but not acyl-CoA. The protein is Phosphate acyltransferase of Shewanella woodyi (strain ATCC 51908 / MS32).